The following is a 324-amino-acid chain: Putative transport protein TM_1187 (324 aa).

A run of 8 helical transmembrane segments spans residues 12–32 (LYLVLFLVLAKLSPFIITALI), 62–82 (ISNVLVFLTIAYSAVNFFPVI), 105–125 (IPGWLSSILSSISASFSEGAL), 131–151 (IVGYVPSFITAAILIVITAFI), 190–210 (GGQVLVAIFVGLFVGFGAFIF), 227–247 (FVPYLGVVISAIPLLMLAFSV), 252–272 (GLLIGTIILVAANQLEMWVLA), and 285–305 (FIILIMILILGDLFSFGGVLI).

Belongs to the autoinducer-2 exporter (AI-2E) (TC 2.A.86) family.

The protein resides in the cell membrane. The polypeptide is Putative transport protein TM_1187 (Thermotoga maritima (strain ATCC 43589 / DSM 3109 / JCM 10099 / NBRC 100826 / MSB8)).